The chain runs to 107 residues: MQRLKKGDKVRVISGSEKGKEGIILQVFPELNTAQVEGVNVRKRHKKANQENQEGGIVDIAVPLNMSKLALIDNKAKGKTTRIKYGFDKNNKKVRISKISNSEIGSK.

This sequence belongs to the universal ribosomal protein uL24 family. As to quaternary structure, part of the 50S ribosomal subunit.

Its function is as follows. One of two assembly initiator proteins, it binds directly to the 5'-end of the 23S rRNA, where it nucleates assembly of the 50S subunit. Functionally, one of the proteins that surrounds the polypeptide exit tunnel on the outside of the subunit. The protein is Large ribosomal subunit protein uL24 of Malacoplasma penetrans (strain HF-2) (Mycoplasma penetrans).